The following is a 34-amino-acid chain: Photosystem II reaction center protein M (34 aa).

Residues 5-25 (ILALIAVALFISIPTAFLVII) traverse the membrane as a helical segment.

The protein belongs to the PsbM family. As to quaternary structure, PSII is composed of 1 copy each of membrane proteins PsbA, PsbB, PsbC, PsbD, PsbE, PsbF, PsbH, PsbI, PsbJ, PsbK, PsbL, PsbM, PsbT, PsbX, PsbY, PsbZ, Psb30/Ycf12, at least 3 peripheral proteins of the oxygen-evolving complex and a large number of cofactors. It forms dimeric complexes.

The protein localises to the plastid. It is found in the chloroplast thylakoid membrane. One of the components of the core complex of photosystem II (PSII). PSII is a light-driven water:plastoquinone oxidoreductase that uses light energy to abstract electrons from H(2)O, generating O(2) and a proton gradient subsequently used for ATP formation. It consists of a core antenna complex that captures photons, and an electron transfer chain that converts photonic excitation into a charge separation. This subunit is found at the monomer-monomer interface. This chain is Photosystem II reaction center protein M, found in Welwitschia mirabilis (Tree tumbo).